A 215-amino-acid polypeptide reads, in one-letter code: Orotidine 5'-phosphate decarboxylase (215 aa).

Residues Asp12, Lys34, 60–69 (DFKVADIPNT), Ser117, 170–180 (PGVGAQGGSAA), Gly193, and Arg194 each bind substrate. Lys62 serves as the catalytic Proton donor.

This sequence belongs to the OMP decarboxylase family. Type 1 subfamily. In terms of assembly, homodimer.

The enzyme catalyses orotidine 5'-phosphate + H(+) = UMP + CO2. It functions in the pathway pyrimidine metabolism; UMP biosynthesis via de novo pathway; UMP from orotate: step 2/2. In terms of biological role, catalyzes the decarboxylation of orotidine 5'-monophosphate (OMP) to uridine 5'-monophosphate (UMP). This is Orotidine 5'-phosphate decarboxylase from Methanococcoides burtonii (strain DSM 6242 / NBRC 107633 / OCM 468 / ACE-M).